A 625-amino-acid polypeptide reads, in one-letter code: Protein arginine N-methyltransferase skb1 (625 aa).

Positions 280–588 (LQVPLQPLSY…WRLTDGMRVW (309 aa)) constitute an SAM-dependent MTase PRMT-type domain. S-adenosyl-L-methionine-binding positions include Tyr-296, 305 to 306 (KY), Glu-359, and 386 to 387 (DM). Residues Glu-402 and Glu-411 each act as proton donor/acceptor in the active site.

This sequence belongs to the class I-like SAM-binding methyltransferase superfamily. Protein arginine N-methyltransferase family. Interacts with the N-terminal regulatory domain of shk1. Shk1, cdc42 and skb1 are able to form a ternary complex in vivo. Interacts with orb6. Interacts with Cdr1 and the Cdr1 inhibitory target Wee1.

It is found in the nucleus. The protein localises to the cell tip. It localises to the cell septum. Its subcellular location is the cytoplasm. The protein resides in the cell cortex. Its function is as follows. S-adenosyl-L-methionine-dependent protein-arginine N-methyltransferase that can catalyze both the mono- and symmetric (type II) dimethylation of the guanidino nitrogens of arginine residues in target proteins. Delays mitotic entry by inhibiting the Cdr1-Wee1 signaling pathway. Cortical nodes sequester Skb1 from its regulatory targets Cdr1 and Wee1. Positively modulates the shk1 kinase function. May be a mediator of hyperosmotic stress response. Involved in the control of cell polarity by regulating the subcellular localization of Orb6 kinase. The polypeptide is Protein arginine N-methyltransferase skb1 (Schizosaccharomyces pombe (strain 972 / ATCC 24843) (Fission yeast)).